The primary structure comprises 400 residues: CinA-like protein (400 aa).

The protein belongs to the CinA family.

The chain is CinA-like protein from Escherichia coli (strain K12 / MC4100 / BW2952).